A 181-amino-acid chain; its full sequence is Inner membrane-spanning protein YciB (181 aa).

A run of 5 helical transmembrane segments spans residues 10 to 30 (LIIF…GALI), 50 to 70 (MHLI…VFHD), 72 to 92 (AFIK…LGVS), 118 to 138 (VTWY…YVAF), and 148 to 168 (FKVF…VFYL).

The protein belongs to the YciB family.

It is found in the cell inner membrane. Its function is as follows. Plays a role in cell envelope biogenesis, maintenance of cell envelope integrity and membrane homeostasis. This chain is Inner membrane-spanning protein YciB, found in Shewanella sp. (strain MR-7).